Here is a 167-residue protein sequence, read N- to C-terminus: UPF0262 protein Nwi_0248 (167 aa).

Belongs to the UPF0262 family.

This is UPF0262 protein Nwi_0248 from Nitrobacter winogradskyi (strain ATCC 25391 / DSM 10237 / CIP 104748 / NCIMB 11846 / Nb-255).